The sequence spans 112 residues: MNITTQDKFEEMEIEKTLGLVRGSTIRTKNIGYDLIASLRTIVGGEIPEYTKMMDESREEALKRMYREAQRRGADAVVGVRFETSSILAGSAEFLCYGTAVKLKNNIQLNFK.

Belongs to the UPF0145 family.

The polypeptide is UPF0145 protein MmarC6_1828 (Methanococcus maripaludis (strain C6 / ATCC BAA-1332)).